Here is a 56-residue protein sequence, read N- to C-terminus: Large ribosomal subunit protein bL33 (56 aa).

Belongs to the bacterial ribosomal protein bL33 family.

This Beutenbergia cavernae (strain ATCC BAA-8 / DSM 12333 / CCUG 43141 / JCM 11478 / NBRC 16432 / NCIMB 13614 / HKI 0122) protein is Large ribosomal subunit protein bL33.